The sequence spans 366 residues: Protein RecA (366 aa).

77-84 (GPESSGKT) is a binding site for ATP. The disordered stretch occupies residues 346-366 (IGGPGGEDDDAGGAAGVGDEA).

This sequence belongs to the RecA family.

The protein resides in the cytoplasm. Functionally, can catalyze the hydrolysis of ATP in the presence of single-stranded DNA, the ATP-dependent uptake of single-stranded DNA by duplex DNA, and the ATP-dependent hybridization of homologous single-stranded DNAs. It interacts with LexA causing its activation and leading to its autocatalytic cleavage. The polypeptide is Protein RecA (Rhodospirillum rubrum (strain ATCC 11170 / ATH 1.1.1 / DSM 467 / LMG 4362 / NCIMB 8255 / S1)).